The chain runs to 562 residues: uncharacterized protein (562 aa).

Transmembrane regions (helical) follow at residues 15–34 (WGGG…AFGI), 41–63 (VAGI…HFNL), 78–97 (LILF…FSAF), 104–126 (LNML…HFIT), and 165–187 (IALG…LLGL). RCK C-terminal domains are found at residues 204–286 (QGLG…ITAF) and 289–374 (KPIE…VLGN). Transmembrane regions (helical) follow at residues 384-403 (LIPI…IPFM), 413-430 (LGLA…SRFG), 450-472 (IGIS…ETII), 476-498 (GYVW…GFIG), 505-524 (NYYT…PALA), and 539-561 (YATV…ILSL).

It belongs to the AAE transporter (TC 2.A.81) family.

It is found in the cell membrane. This is an uncharacterized protein from Bacteroides fragilis (strain YCH46).